A 260-amino-acid chain; its full sequence is Snake venom serine protease gussurobin (260 aa).

An N-terminal signal peptide occupies residues 1 to 18 (MVLIRVLANLLILQLSYA). Positions 19–24 (QKSSEL) are excised as a propeptide. The 227-residue stretch at 25-251 (IIGGDECNIN…YTEWIQSTIA (227 aa)) folds into the Peptidase S1 domain. Disulfide bonds link cysteine 31-cysteine 165, cysteine 52-cysteine 68, cysteine 100-cysteine 258, cysteine 144-cysteine 212, cysteine 176-cysteine 191, and cysteine 202-cysteine 227. Catalysis depends on charge relay system residues histidine 67 and aspartate 112. Residues asparagine 123 and asparagine 124 are each glycosylated (N-linked (GlcNAc...) asparagine). The active-site Charge relay system is serine 206.

The protein belongs to the peptidase S1 family. Snake venom subfamily. In terms of assembly, monomer. In terms of tissue distribution, expressed by the venom gland.

It localises to the secreted. In terms of biological role, snake venom serine protease that may act in the hemostasis system of the prey. The sequence is that of Snake venom serine protease gussurobin from Gloydius ussuriensis (Ussuri mamushi).